A 227-amino-acid polypeptide reads, in one-letter code: UPF0173 metal-dependent hydrolase BCE_4747 (227 aa).

Belongs to the UPF0173 family.

In Bacillus cereus (strain ATCC 10987 / NRS 248), this protein is UPF0173 metal-dependent hydrolase BCE_4747.